A 1355-amino-acid polypeptide reads, in one-letter code: Phosphoribosylformylglycinamidine synthase (1355 aa).

Residues 326-337 (GAETGTGGRLRD) and 406-408 (IGF) each bind ATP. Mg(2+) is bound by residues Glu-743, Asn-747, and Asp-911. Position 913 (Ser-913) interacts with ATP. The Glutamine amidotransferase type-1 domain maps to 1087 to 1325 (KVAVIREEGS…LSWQWPFMPE (239 aa)). The active-site Nucleophile is the Cys-1182. Residues His-1310 and Glu-1312 contribute to the active site.

The protein in the N-terminal section; belongs to the FGAMS family.

The protein localises to the cytoplasm. The enzyme catalyses N(2)-formyl-N(1)-(5-phospho-beta-D-ribosyl)glycinamide + L-glutamine + ATP + H2O = 2-formamido-N(1)-(5-O-phospho-beta-D-ribosyl)acetamidine + L-glutamate + ADP + phosphate + H(+). Its pathway is purine metabolism; IMP biosynthesis via de novo pathway; 5-amino-1-(5-phospho-D-ribosyl)imidazole from N(2)-formyl-N(1)-(5-phospho-D-ribosyl)glycinamide: step 1/2. Its function is as follows. Phosphoribosylformylglycinamidine synthase involved in the purines biosynthetic pathway. Catalyzes the ATP-dependent conversion of formylglycinamide ribonucleotide (FGAR) and glutamine to yield formylglycinamidine ribonucleotide (FGAM) and glutamate. This Dictyostelium discoideum (Social amoeba) protein is Phosphoribosylformylglycinamidine synthase (purL).